We begin with the raw amino-acid sequence, 70 residues long: Large ribosomal subunit protein bL31 (70 aa).

The Zn(2+) site is built by Cys16, Cys18, Cys36, and Cys39.

Belongs to the bacterial ribosomal protein bL31 family. Type A subfamily. Part of the 50S ribosomal subunit. Zn(2+) serves as cofactor.

Binds the 23S rRNA. The chain is Large ribosomal subunit protein bL31 from Tolumonas auensis (strain DSM 9187 / NBRC 110442 / TA 4).